Reading from the N-terminus, the 400-residue chain is Mu-type opioid receptor (400 aa).

Residues 1-68 (MDSSAVPTNA…CPPTGSPSMI (68 aa)) lie on the Extracellular side of the membrane. Residues asparagine 9, asparagine 12, asparagine 33, asparagine 40, and asparagine 48 are each glycosylated (N-linked (GlcNAc...) asparagine). Residues 69–93 (TAITIMALYSIVCVVGLFGNFLVMY) traverse the membrane as a helical segment. Residues 94–106 (VIVRYTKMKTATN) are Cytoplasmic-facing. A helical transmembrane segment spans residues 107-131 (IYIFNLALADALVTSTLPFQSVNYL). Residues 132 to 142 (MGTWPFGTILC) are Extracellular-facing. A disulfide bond links cysteine 142 and cysteine 219. A helical transmembrane segment spans residues 143–165 (KIVISIDYYNMSTSIFTLCTMSV). The Cytoplasmic portion of the chain corresponds to 166-185 (DRYIAVCHPVKALDFRTPRN). Tyrosine 168 bears the Phosphotyrosine mark. The helical transmembrane segment at 186 to 207 (AKIINVCNWILSSAIGLPVMFM) threads the bilayer. Topologically, residues 208–230 (ATTKYRQGSIDCTLTFSHPSWYW) are extracellular. A helical membrane pass occupies residues 231 to 255 (ENLLKICVFIFAFIMPVLIITVCYG). At 256-283 (LMILRLKSVRMLSGSKEKDRNLRRITRM) the chain is on the cytoplasmic side. Residues 284–306 (VLVVVAVFIICWTPIHIYVIIKA) traverse the membrane as a helical segment. Topologically, residues 307–314 (LVTIPETT) are extracellular. A helical membrane pass occupies residues 315-338 (FQTVSWHFCIALGYTNSCLNPVLY). Positions 334-338 (NPVLY) match the NPxxY; plays a role in stabilizing the activated conformation of the receptor motif. Residues 339–400 (AFLDEDFKRC…NLEAETAPLP (62 aa)) lie on the Cytoplasmic side of the membrane. A lipid anchor (S-palmitoyl cysteine) is attached at cysteine 353. The disordered stretch occupies residues 364–386 (NSTRIRQNTRDHPSTANTVDRTN). The residue at position 365 (serine 365) is a Phosphoserine. Threonine 372 is subject to Phosphothreonine. Phosphoserine is present on serine 377. At threonine 396 the chain carries Phosphothreonine.

This sequence belongs to the G-protein coupled receptor 1 family. Forms homooligomers and heterooligomers with other GPCRs, such as OPRD1, OPRK1, OPRL1, NPFFR2, ADRA2A, SSTR2, CNR1 and CCR5 (probably in dimeric forms). Interacts with heterotrimeric G proteins; interaction with a heterotrimeric complex containing GNAI1, GNB1 and GNG2 stabilizes the active conformation of the receptor and increases its affinity for endomorphin-2, the synthetic opioid peptide DAMGO and for morphinan agonists. Interacts with PPL; the interaction disrupts agonist-mediated G-protein activation. Interacts (via C-terminus) with DNAJB4 (via C-terminus). Interacts with calmodulin; the interaction inhibits the constitutive activity of OPRM1; it abolishes basal and attenuates agonist-stimulated G-protein coupling. Interacts with FLNA, PLD2, RANBP9 and WLS and GPM6A. Interacts with RTP4. Interacts with SYP and GNAS. Interacts with RGS9, RGS17, RGS20, RGS4, PPP1R9B and HINT1. Phosphorylated. Differentially phosphorylated in basal and agonist-induced conditions. Agonist-mediated phosphorylation modulates receptor internalization. Phosphorylated by GRK2 in a agonist-dependent manner. Phosphorylation at Tyr-168 requires receptor activation, is dependent on non-receptor protein tyrosine kinase Src and results in a decrease in agonist efficacy by reducing G-protein coupling efficiency. Phosphorylated on tyrosine residues; the phosphorylation is involved in agonist-induced G-protein-independent receptor down-regulation. Phosphorylation at Ser-377 is involved in G-protein-dependent but not beta-arrestin-dependent activation of the ERK pathway. Post-translationally, ubiquitinated. A basal ubiquitination seems not to be related to degradation. Ubiquitination is increased upon formation of OPRM1:OPRD1 oligomers leading to proteasomal degradation; the ubiquitination is diminished by RTP4.

The protein resides in the cell membrane. It is found in the cell projection. It localises to the axon. The protein localises to the perikaryon. Its subcellular location is the dendrite. The protein resides in the endosome. In terms of biological role, receptor for endogenous opioids such as beta-endorphin and endomorphin. Receptor for natural and synthetic opioids including morphine, heroin, DAMGO, fentanyl, etorphine, buprenorphin and methadone. Also activated by enkephalin peptides, such as Met-enkephalin or Met-enkephalin-Arg-Phe, with higher affinity for Met-enkephalin-Arg-Phe. Agonist binding to the receptor induces coupling to an inactive GDP-bound heterotrimeric G-protein complex and subsequent exchange of GDP for GTP in the G-protein alpha subunit leading to dissociation of the G-protein complex with the free GTP-bound G-protein alpha and the G-protein beta-gamma dimer activating downstream cellular effectors. The agonist- and cell type-specific activity is predominantly coupled to pertussis toxin-sensitive G(i) and G(o) G alpha proteins, GNAI1, GNAI2, GNAI3 and GNAO1, and to a lesser extent to pertussis toxin-insensitive G alpha proteins GNAZ and GNA15. They mediate an array of downstream cellular responses, including inhibition of adenylate cyclase activity and both N-type and L-type calcium channels, activation of inward rectifying potassium channels, mitogen-activated protein kinase (MAPK), phospholipase C (PLC), phosphoinositide/protein kinase (PKC), phosphoinositide 3-kinase (PI3K) and regulation of NF-kappa-B. Also couples to adenylate cyclase stimulatory G alpha proteins. The selective temporal coupling to G-proteins and subsequent signaling can be regulated by RGSZ proteins, such as RGS9, RGS17 and RGS4. Phosphorylation by members of the GPRK subfamily of Ser/Thr protein kinases and association with beta-arrestins is involved in short-term receptor desensitization. Beta-arrestins associate with the GPRK-phosphorylated receptor and uncouple it from the G-protein thus terminating signal transduction. The phosphorylated receptor is internalized through endocytosis via clathrin-coated pits which involves beta-arrestins. The activation of the ERK pathway occurs either in a G-protein-dependent or a beta-arrestin-dependent manner and is regulated by agonist-specific receptor phosphorylation. Acts as a class A G-protein coupled receptor (GPCR) which dissociates from beta-arrestin at or near the plasma membrane and undergoes rapid recycling. Receptor down-regulation pathways are varying with the agonist and occur dependent or independent of G-protein coupling. Endogenous ligands induce rapid desensitization, endocytosis and recycling. Heterooligomerization with other GPCRs can modulate agonist binding, signaling and trafficking properties. Involved in neurogenesis. The polypeptide is Mu-type opioid receptor (OPRM1) (Macaca mulatta (Rhesus macaque)).